The primary structure comprises 293 residues: Histone H3-like centromeric protein CSE4 (293 aa).

The segment covering Gln-132–Tyr-141 has biased composition (acidic residues). The tract at residues Gln-132 to Lys-169 is disordered. Positions Ser-150–Leu-164 are enriched in basic and acidic residues. Residues Arg-157–Gln-291 form an H3-like region.

The protein belongs to the histone H3 family. As to quaternary structure, component of centromeric nucleosomes, where DNA is wrapped around a histone octamer core. The octamer contains two molecules each of H2A, H2B, CSE4/CENPA and H4 assembled in one CSE4-H4 heterotetramer and two H2A-H2B heterodimers. Interacts with the inner kinetochore. In terms of processing, ubiquitinated. Is degraded through ubiquitin-mediated proteolysis when not protected by its association to the kinetochore.

The protein localises to the nucleus. Its subcellular location is the chromosome. It is found in the centromere. Functionally, histone H3-like nucleosomal protein that is specifically found in centromeric nucleosomes. Replaces conventional H3 in the nucleosome core of centromeric chromatin that serves as an assembly site for the inner kinetochore. Required for recruitment and assembly of kinetochore proteins, mitotic progression and chromosome segregation. May serve as an epigenetic mark that propagates centromere identity through replication and cell division. This is Histone H3-like centromeric protein CSE4 (CSE4) from Monosporozyma servazzii (Yeast).